A 728-amino-acid chain; its full sequence is Catalase-peroxidase 1 (728 aa).

Positions 91–218 (WHGAGTYRIA…LAAVQMGLIY (128 aa)) form a cross-link, tryptophyl-tyrosyl-methioninium (Trp-Tyr) (with M-244). Residue H92 is the Proton acceptor of the active site. The segment at residues 218–244 (YVNPEGPDGKPDPVAAARDIRDTFARM) is a cross-link (tryptophyl-tyrosyl-methioninium (Tyr-Met) (with W-91)). Residue H259 coordinates heme b.

It belongs to the peroxidase family. Peroxidase/catalase subfamily. As to quaternary structure, homodimer or homotetramer. Heme b is required as a cofactor. Formation of the three residue Trp-Tyr-Met cross-link is important for the catalase, but not the peroxidase activity of the enzyme.

It carries out the reaction H2O2 + AH2 = A + 2 H2O. The enzyme catalyses 2 H2O2 = O2 + 2 H2O. Functionally, bifunctional enzyme with both catalase and broad-spectrum peroxidase activity. The chain is Catalase-peroxidase 1 from Burkholderia vietnamiensis (strain G4 / LMG 22486) (Burkholderia cepacia (strain R1808)).